Consider the following 85-residue polypeptide: MFAPLAVFGSLGWTEILLILFIALLLFGGKRLPSLAKDLGDGIRSFRKSLTGESDDSSQQISQEQERSVPKEETKTSKSKKSKSA.

A helical transmembrane segment spans residues 7–27 (VFGSLGWTEILLILFIALLLF). The segment at 50 to 85 (LTGESDDSSQQISQEQERSVPKEETKTSKSKKSKSA) is disordered. The span at 64-76 (EQERSVPKEETKT) shows a compositional bias: basic and acidic residues.

Belongs to the TatA/E family. Forms a complex with TatC.

It localises to the cell inner membrane. Part of the twin-arginine translocation (Tat) system that transports large folded proteins containing a characteristic twin-arginine motif in their signal peptide across membranes. TatA could form the protein-conducting channel of the Tat system. This chain is Sec-independent protein translocase protein TatA, found in Leptospira interrogans serogroup Icterohaemorrhagiae serovar Lai (strain 56601).